The sequence spans 288 residues: Light-independent protochlorophyllide reductase iron-sulfur ATP-binding protein (288 aa).

ATP-binding positions include 10–15 and Lys-39; that span reads GIGKST. Residue Ser-14 participates in Mg(2+) binding. Positions 95 and 129 each coordinate [4Fe-4S] cluster. Residue 180–181 participates in ATP binding; that stretch reads NR.

It belongs to the NifH/BchL/ChlL family. Homodimer. Protochlorophyllide reductase is composed of three subunits; ChlL, ChlN and ChlB. The cofactor is [4Fe-4S] cluster.

It is found in the plastid. Its subcellular location is the chloroplast. The catalysed reaction is chlorophyllide a + oxidized 2[4Fe-4S]-[ferredoxin] + 2 ADP + 2 phosphate = protochlorophyllide a + reduced 2[4Fe-4S]-[ferredoxin] + 2 ATP + 2 H2O. Its pathway is porphyrin-containing compound metabolism; chlorophyll biosynthesis (light-independent). Functionally, component of the dark-operative protochlorophyllide reductase (DPOR) that uses Mg-ATP and reduced ferredoxin to reduce ring D of protochlorophyllide (Pchlide) to form chlorophyllide a (Chlide). This reaction is light-independent. The L component serves as a unique electron donor to the NB-component of the complex, and binds Mg-ATP. This Chara vulgaris (Common stonewort) protein is Light-independent protochlorophyllide reductase iron-sulfur ATP-binding protein.